The following is a 280-amino-acid chain: Protein IMPACT homolog (280 aa).

In terms of domain architecture, RWD spans Asp9–Leu109.

This sequence belongs to the IMPACT family. As to quaternary structure, interacts (via N-terminus) with gcn1 (via C-terminus); this interaction reduces the gcn1-gcn20 complex formation and prevents the interaction of gcn1 with gcn2 protein kinase and gcn2 activation in amino acid-starved cells. Interacts (via C-terminus) with act1; this interaction occurs in a gcn1-independent manner. Interacts with rpl39; this interaction occurs in a gcn1-independent manner. Associates (via middle region) with ribosomes; this association occurs in a gcn1-independent manner and persists under amino acid starvation conditions.

The protein localises to the cytoplasm. The protein resides in the nucleus. Functionally, translational regulator that ensures constant high levels of translation under amino acid starvation. Plays a role as a negative regulator of the gcn2 kinase activity; impairs gcn1-mediated gcn2 activation, and hence gcn2-mediated eIF-2-alpha phosphorylation in amino acid-starved cells and subsequent down-regulation of protein synthesis. In normal conditions, it resides in a actin complex and has no activity. The protein is Protein IMPACT homolog (yih1) of Schizosaccharomyces pombe (strain 972 / ATCC 24843) (Fission yeast).